The following is a 358-amino-acid chain: Probable protein phosphatase 2C 34 (358 aa).

Positions L62–F349 constitute a PPM-type phosphatase domain. Mn(2+)-binding residues include D98, G99, D294, and D340.

It belongs to the PP2C family. It depends on Mg(2+) as a cofactor. Mn(2+) serves as cofactor.

It carries out the reaction O-phospho-L-seryl-[protein] + H2O = L-seryl-[protein] + phosphate. The catalysed reaction is O-phospho-L-threonyl-[protein] + H2O = L-threonyl-[protein] + phosphate. The chain is Probable protein phosphatase 2C 34 from Arabidopsis thaliana (Mouse-ear cress).